We begin with the raw amino-acid sequence, 202 residues long: Na(+)-translocating NADH-quinone reductase subunit E (202 aa).

Transmembrane regions (helical) follow at residues 11–31 (AIFV…FLAI), 35–55 (IEAA…TVPV), 81–101 (FLGL…MEMV), 114–134 (GVFL…LFMV), 144–164 (LVYG…LAGI), and 180–200 (LGIT…FSGI).

It belongs to the NqrDE/RnfAE family. As to quaternary structure, composed of six subunits; NqrA, NqrB, NqrC, NqrD, NqrE and NqrF.

It is found in the cell inner membrane. It catalyses the reaction a ubiquinone + n Na(+)(in) + NADH + H(+) = a ubiquinol + n Na(+)(out) + NAD(+). In terms of biological role, NQR complex catalyzes the reduction of ubiquinone-1 to ubiquinol by two successive reactions, coupled with the transport of Na(+) ions from the cytoplasm to the periplasm. NqrA to NqrE are probably involved in the second step, the conversion of ubisemiquinone to ubiquinol. In Marinobacter nauticus (strain ATCC 700491 / DSM 11845 / VT8) (Marinobacter aquaeolei), this protein is Na(+)-translocating NADH-quinone reductase subunit E.